The sequence spans 341 residues: UPF0283 membrane protein VV2076 (341 aa).

The next 4 helical transmembrane spans lie at 64–84, 93–113, 207–227, and 255–275; these read LAGG…VDSV, WLTL…LGAM, ESAA…LVAW, and LVLA…AGMD.

This sequence belongs to the UPF0283 family.

The protein localises to the cell inner membrane. The chain is UPF0283 membrane protein VV2076 from Vibrio vulnificus (strain YJ016).